The primary structure comprises 230 residues: Large ribosomal subunit protein uL1 (230 aa).

This sequence belongs to the universal ribosomal protein uL1 family. In terms of assembly, part of the 50S ribosomal subunit.

Functionally, binds directly to 23S rRNA. The L1 stalk is quite mobile in the ribosome, and is involved in E site tRNA release. In terms of biological role, protein L1 is also a translational repressor protein, it controls the translation of the L11 operon by binding to its mRNA. The chain is Large ribosomal subunit protein uL1 from Lactobacillus acidophilus (strain ATCC 700396 / NCK56 / N2 / NCFM).